A 296-amino-acid polypeptide reads, in one-letter code: Ribosomal protein L11 methyltransferase (296 aa).

S-adenosyl-L-methionine-binding residues include Thr-145, Gly-166, Asp-188, and Asn-230.

Belongs to the methyltransferase superfamily. PrmA family.

Its subcellular location is the cytoplasm. It catalyses the reaction L-lysyl-[protein] + 3 S-adenosyl-L-methionine = N(6),N(6),N(6)-trimethyl-L-lysyl-[protein] + 3 S-adenosyl-L-homocysteine + 3 H(+). In terms of biological role, methylates ribosomal protein L11. In Histophilus somni (strain 129Pt) (Haemophilus somnus), this protein is Ribosomal protein L11 methyltransferase.